A 490-amino-acid chain; its full sequence is Katanin p60 ATPase-containing subunit A-like 1 (490 aa).

Met-1 is subject to N-acetylmethionine. Residues 95 to 178 (DPAVWPPPVP…MQDGASDGDI (84 aa)) form a disordered region. Over residues 116–127 (PNREVRPLRKDV) the composition is skewed to basic and acidic residues. Residues 128 to 139 (AGVGARGPVGRA) show a composition bias toward low complexity. Basic and acidic residues predominate over residues 143 to 169 (SKSEKPSTNKDKDYRARGRDDKGRKNM). A Phosphoserine modification is found at Ser-174. 248–255 (GPPGTGKT) is a binding site for ATP.

It belongs to the AAA ATPase family. Katanin p60 subunit A1 subfamily. A-like 1 sub-subfamily. Interacts with KATNB1 and KATNBL1.

It localises to the cytoplasm. Its subcellular location is the cytoskeleton. The protein localises to the spindle pole. It is found in the spindle. It carries out the reaction n ATP + n H2O + a microtubule = n ADP + n phosphate + (n+1) alpha/beta tubulin heterodimers.. Functionally, regulates microtubule dynamics in Sertoli cells, a process that is essential for spermiogenesis and male fertility. Severs microtubules in an ATP-dependent manner, promoting rapid reorganization of cellular microtubule arrays. Has microtubule-severing activity in vitro. The sequence is that of Katanin p60 ATPase-containing subunit A-like 1 from Sorex araneus (Eurasian common shrew).